A 284-amino-acid chain; its full sequence is MVNINELPENILLELFTHVPAPQLLRNCRLVCSLWRDLIDVMTLWKRKSLREGFVTKDRDEPVDDWKIFYILCSLQRNLLRNPCAEENLRSWRIDSNGGDEWKVESLPGDHGTSFPDTKVKKYFVTSYGMCLKSQMVDLKAEGYSEKLLDTVRPDIVVKDWFAPRADCGCTYHLRVQLASADYIVLASFEPPPVTIEQWNDASWQEISHTFSNYPPGVRHILFQHGGKDTQFWKGWYGPRVTNSSIIVSHRTAKNPAPARTLPEEDTSNRRKILSFGSWEDLSP.

An F-box domain is found at 1–48 (MVNINELPENILLELFTHVPAPQLLRNCRLVCSLWRDLIDVMTLWKRK). One can recognise an FBA domain in the interval 69–250 (FYILCSLQRN…VTNSSIIVSH (182 aa)). Phosphoserine is present on residues Ser249, Ser268, Ser275, Ser278, and Ser283.

As to quaternary structure, part of a SCF (SKP1-cullin-F-box) protein ligase complex. Interacts with VCP, CHEK1 and CUL1.

It is found in the cytoplasm. It functions in the pathway protein modification; protein ubiquitination. Functionally, substrate-recognition component of some SCF (SKP1-CUL1-F-box protein)-type E3 ubiquitin ligase complexes. Involved in endoplasmic reticulum-associated degradation pathway (ERAD) for misfolded lumenal proteins by recognizing and binding sugar chains on unfolded glycoproteins that are retrotranslocated into the cytosol and promoting their ubiquitination and subsequent degradation. Able to recognize and bind denatured glycoproteins, which are modified with not only high-mannose but also complex-type oligosaccharides. Also recognizes sulfated glycans. Also involved in DNA damage response by specifically recognizing activated CHEK1 (phosphorylated on 'Ser-345'), promoting its ubiquitination and degradation. Ubiquitination of CHEK1 is required to ensure that activated CHEK1 does not accumulate as cells progress through S phase, or when replication forks encounter transient impediments during normal DNA replication. In Rattus norvegicus (Rat), this protein is F-box only protein 6 (Fbxo6).